Reading from the N-terminus, the 396-residue chain is Elongation factor Tu (396 aa).

Residues 10-206 (KPHCNIGTIG…AVDAYIPQPE (197 aa)) enclose the tr-type G domain. The interval 19 to 26 (GHVDHGKT) is G1. 19 to 26 (GHVDHGKT) provides a ligand contact to GTP. Residue Thr26 coordinates Mg(2+). The tract at residues 60-64 (GITIS) is G2. Residues 81–84 (DCPG) form a G3 region. Residues 81–85 (DCPGH) and 136–139 (NKCD) each bind GTP. Residues 136–139 (NKCD) are G4. The interval 174–176 (SAL) is G5.

The protein belongs to the TRAFAC class translation factor GTPase superfamily. Classic translation factor GTPase family. EF-Tu/EF-1A subfamily. As to quaternary structure, monomer.

Its subcellular location is the cytoplasm. It carries out the reaction GTP + H2O = GDP + phosphate + H(+). Its function is as follows. GTP hydrolase that promotes the GTP-dependent binding of aminoacyl-tRNA to the A-site of ribosomes during protein biosynthesis. This Nitrobacter winogradskyi (strain ATCC 25391 / DSM 10237 / CIP 104748 / NCIMB 11846 / Nb-255) protein is Elongation factor Tu.